Here is a 181-residue protein sequence, read N- to C-terminus: uncharacterized protein (181 aa).

Residues Met-1–Leu-178 enclose the Macro domain.

This is an uncharacterized protein from Sulfolobus acidocaldarius (strain ATCC 33909 / DSM 639 / JCM 8929 / NBRC 15157 / NCIMB 11770).